The following is a 459-amino-acid chain: Taurine--pyruvate aminotransferase (459 aa).

An N6-(pyridoxal phosphate)lysine modification is found at K287.

It belongs to the class-III pyridoxal-phosphate-dependent aminotransferase family. The cofactor is pyridoxal 5'-phosphate.

The protein localises to the cytoplasm. The catalysed reaction is taurine + pyruvate = sulfoacetaldehyde + L-alanine. The protein operates within organosulfur degradation; taurine degradation via aerobic pathway; acetyl phosphate and sulfite from taurine: step 1/2. In terms of biological role, catalyzes the degradation of taurine into alanine and sulfoacetaldehyde. In Rhodobacter capsulatus (strain ATCC BAA-309 / NBRC 16581 / SB1003), this protein is Taurine--pyruvate aminotransferase.